Reading from the N-terminus, the 354-residue chain is Photosystem II protein D1 3 (354 aa).

Helical transmembrane passes span 29-46, 118-133, and 142-156; these read YIGWFGVLMIPTLLTATT, HFLIGVFCYMGREWEL, and WIAVAYSAPVAAATA. His-118 provides a ligand contact to chlorophyll a. A pheophytin a-binding site is contributed by Tyr-126. [CaMn4O5] cluster is bound by residues Asp-170 and Glu-189. The helical transmembrane segment at 197–218 threads the bilayer; that stretch reads FHQLGVAGVFGGALFSAMHGSL. His-198 contacts chlorophyll a. A quinone-binding positions include His-215 and 264-265; that span reads SF. His-215 is a binding site for Fe cation. Position 272 (His-272) interacts with Fe cation. The helical transmembrane segment at 274-288 threads the bilayer; it reads FLAAWPVIGIWFTAL. 4 residues coordinate [CaMn4O5] cluster: His-332, Glu-333, Asp-342, and Ala-344. Positions 345–354 are excised as a propeptide; that stretch reads AVEVAPAVRG.

This sequence belongs to the reaction center PufL/M/PsbA/D family. As to quaternary structure, PSII is composed of 1 copy each of membrane proteins PsbA, PsbB, PsbC, PsbD, PsbE, PsbF, PsbH, PsbI, PsbJ, PsbK, PsbL, PsbM, PsbT, PsbX, PsbY, PsbZ, Psb30/Ycf12, peripheral proteins PsbO, CyanoQ (PsbQ), PsbU, PsbV and a large number of cofactors. It forms dimeric complexes. The D1/D2 heterodimer binds P680, chlorophylls that are the primary electron donor of PSII, and subsequent electron acceptors. It shares a non-heme iron and each subunit binds pheophytin, quinone, additional chlorophylls, carotenoids and lipids. D1 provides most of the ligands for the Mn4-Ca-O5 cluster of the oxygen-evolving complex (OEC). There is also a Cl(-1) ion associated with D1 and D2, which is required for oxygen evolution. The PSII complex binds additional chlorophylls, carotenoids and specific lipids. serves as cofactor. Tyr-161 forms a radical intermediate that is referred to as redox-active TyrZ, YZ or Y-Z. Post-translationally, C-terminally processed by CtpA; processing is essential to allow assembly of the oxygen-evolving complex and thus photosynthetic growth.

It localises to the cellular thylakoid membrane. The catalysed reaction is 2 a plastoquinone + 4 hnu + 2 H2O = 2 a plastoquinol + O2. Its function is as follows. Photosystem II (PSII) is a light-driven water:plastoquinone oxidoreductase that uses light energy to abstract electrons from H(2)O, generating O(2) and a proton gradient subsequently used for ATP formation. It consists of a core antenna complex that captures photons, and an electron transfer chain that converts photonic excitation into a charge separation. The D1/D2 (PsbA/PsbD) reaction center heterodimer binds P680, the primary electron donor of PSII as well as several subsequent electron acceptors. The polypeptide is Photosystem II protein D1 3 (Synechococcus sp. (strain JA-3-3Ab) (Cyanobacteria bacterium Yellowstone A-Prime)).